Reading from the N-terminus, the 215-residue chain is MSEHETAGEGRFNSIEIRVLGSLIEKQATSPESYPLTLNALVLACNQKTSREPVMNLTQGQVGQALRALEGQDLTRLQMGSRADRWEQRVDKALELVPAQLVLMGLMFLRGPQTLNELLTRSNRLHDFDDTEQIQHQLERLISRDLALHLPRQAGQREDRYTHALGDPAEIEAILAARQQEGGARSSGASVSEERIEALEARIAALEARLAELEG.

It belongs to the UPF0502 family.

The chain is UPF0502 protein PputGB1_3531 from Pseudomonas putida (strain GB-1).